A 579-amino-acid chain; its full sequence is Peptidoglycan D,D-transpeptidase FtsI (579 aa).

A helical membrane pass occupies residues 15–35 (FCVIVGLLLAMVGAIVWRIVD). Ser-294 serves as the catalytic Acyl-ester intermediate. The tract at residues 558 to 579 (DNLPTATEQQQVNAAPAKGGRG) is disordered. Residues 561 to 570 (PTATEQQQVN) are compositionally biased toward polar residues.

The protein belongs to the transpeptidase family. FtsI subfamily.

Its subcellular location is the cell inner membrane. The catalysed reaction is Preferential cleavage: (Ac)2-L-Lys-D-Ala-|-D-Ala. Also transpeptidation of peptidyl-alanyl moieties that are N-acyl substituents of D-alanine.. It participates in cell wall biogenesis; peptidoglycan biosynthesis. Functionally, catalyzes cross-linking of the peptidoglycan cell wall at the division septum. Binds penicillin. The protein is Peptidoglycan D,D-transpeptidase FtsI of Pseudomonas aeruginosa (strain ATCC 15692 / DSM 22644 / CIP 104116 / JCM 14847 / LMG 12228 / 1C / PRS 101 / PAO1).